A 177-amino-acid polypeptide reads, in one-letter code: Nucleoside triphosphate/diphosphate phosphatase (177 aa).

Arg23 serves as the catalytic Proton donor. Mg(2+) is bound by residues Asn87, Asp103, Asp105, Asp107, Asp120, and Glu123.

It belongs to the Ntdp family. Mg(2+) is required as a cofactor.

It carries out the reaction a ribonucleoside 5'-triphosphate + H2O = a ribonucleoside 5'-diphosphate + phosphate + H(+). The catalysed reaction is a ribonucleoside 5'-diphosphate + H2O = a ribonucleoside 5'-phosphate + phosphate + H(+). Its function is as follows. Has nucleoside phosphatase activity towards nucleoside triphosphates and nucleoside diphosphates. In Streptococcus pneumoniae serotype 2 (strain D39 / NCTC 7466), this protein is Nucleoside triphosphate/diphosphate phosphatase.